A 1261-amino-acid polypeptide reads, in one-letter code: Structural maintenance of chromosomes protein 3 (1261 aa).

2 coiled-coil regions span residues 188–332 and 406–450; these read EKIQ…HSLQ and LIAD…YEMD. Residues 534–645 form the SMC hinge domain; that stretch reads NGYYGTVIEL…IIVRTLDQAA (112 aa). Coiled coils occupy residues 677–826, 857–930, and 1023–1085; these read KRSK…MDLM, NERR…DKIT, and RELE…ENRK. Residues 1159-1193 carry the DA-box motif; sequence LSGGQKSLVALAIIFSIQKCDPAPFYLFDEIDAAL.

It belongs to the SMC family. SMC3 subfamily. As to quaternary structure, component of the cohesin complex, composed of the smc-1 and smc-3 heterodimer attached via their SMC hinge domain, scc-1 which links them, and scc-3. Interacts with scc-1, smc-1 and tim-1.

Its subcellular location is the nucleus. The protein resides in the chromosome. In terms of biological role, involved in chromosome cohesion during cell cycle and in DNA repair. Involved in the repair of double strand breaks during mitosis and meiosis. Required for chromosome segregation during mitosis. Central component of cohesin complex. The cohesin complex is required for the cohesion of sister chromatids after DNA replication. The cohesin complex apparently forms a large proteinaceous ring within which sister chromatids can be trapped. At anaphase, the complex is cleaved and dissociates from chromatin, allowing sister chromatids to segregate. Required for the localization of lab-1 to meiotic and mitotic chromosomes. The chain is Structural maintenance of chromosomes protein 3 from Caenorhabditis elegans.